The following is a 78-amino-acid chain: uncharacterized protein (78 aa).

This is an uncharacterized protein from Amsacta (AmEPV).